A 263-amino-acid chain; its full sequence is Probable ribosomal RNA small subunit methyltransferase A (263 aa).

Leu12, Gly37, Glu58, Asp83, and Asn100 together coordinate S-adenosyl-L-methionine.

This sequence belongs to the class I-like SAM-binding methyltransferase superfamily. rRNA adenine N(6)-methyltransferase family. RsmA subfamily.

It localises to the cytoplasm. Specifically dimethylates two adjacent adenosines in the loop of a conserved hairpin near the 3'-end of 16S rRNA in the 30S particle. May play a critical role in biogenesis of 30S subunits. This Methanococcus maripaludis (strain C6 / ATCC BAA-1332) protein is Probable ribosomal RNA small subunit methyltransferase A.